The following is a 737-amino-acid chain: LIMR family protein R05D3.2 (737 aa).

Residues 280–293 (ADIEEENSEQSEDV) are compositionally biased toward acidic residues. Residues 280-416 (ADIEEENSEQ…PKKPKNPNFD (137 aa)) are disordered. Positions 303-318 (ETIHQVDRSDTPHLED) are enriched in basic and acidic residues.

Belongs to the LIMR family.

The chain is LIMR family protein R05D3.2 from Caenorhabditis elegans.